Reading from the N-terminus, the 142-residue chain is MAKKVDGYIKLQVAAGAANPSPPVGPALGQKGVNIMEFCKAFNARTEKFEKGMPIPVVITVYTDRSFTFETKTPPASFLLLKAAGLKSGSGRPNTEKVGTIKRSAVQEIAETKATDMTGADIEAMTRSIEGTARSMGLVVED.

This sequence belongs to the universal ribosomal protein uL11 family. In terms of assembly, part of the ribosomal stalk of the 50S ribosomal subunit. Interacts with L10 and the large rRNA to form the base of the stalk. L10 forms an elongated spine to which L12 dimers bind in a sequential fashion forming a multimeric L10(L12)X complex. Post-translationally, one or more lysine residues are methylated.

Forms part of the ribosomal stalk which helps the ribosome interact with GTP-bound translation factors. This Shewanella sediminis (strain HAW-EB3) protein is Large ribosomal subunit protein uL11.